A 77-amino-acid chain; its full sequence is Metallothionein-like protein 2B (77 aa).

This sequence belongs to the metallothionein superfamily. Type 15 family. In terms of tissue distribution, expressed in vascular tissues of all organs. Expressed in root and leaf phloem, pollen and root hairs.

In terms of biological role, metallothioneins have a high content of cysteine residues that bind various heavy metals. Functions as a metal chelator of copper (Cu) and zinc (Zn). Functions cooperatively with the phytochelatin synthase PCS1 to protect plants from Cu and cadmium toxicity. Plays a role in Cu homeostasis, specifically in the remobilization of Cu from senescing leaves. The mobilization of Cu from internal sources is important for seed development. The protein is Metallothionein-like protein 2B (MT2B) of Arabidopsis thaliana (Mouse-ear cress).